A 282-amino-acid polypeptide reads, in one-letter code: tRNA pseudouridine synthase A (282 aa).

The active-site Nucleophile is D61. Residue Y119 coordinates substrate.

The protein belongs to the tRNA pseudouridine synthase TruA family. In terms of assembly, homodimer.

The catalysed reaction is uridine(38/39/40) in tRNA = pseudouridine(38/39/40) in tRNA. In terms of biological role, formation of pseudouridine at positions 38, 39 and 40 in the anticodon stem and loop of transfer RNAs. The protein is tRNA pseudouridine synthase A of Nostoc sp. (strain PCC 7120 / SAG 25.82 / UTEX 2576).